Here is a 396-residue protein sequence, read N- to C-terminus: 1-deoxy-D-xylulose 5-phosphate reductoisomerase (396 aa).

NADPH contacts are provided by Thr-13, Gly-14, Ser-15, Ile-16, and Asn-127. Lys-128 is a 1-deoxy-D-xylulose 5-phosphate binding site. Position 129 (Glu-129) interacts with NADPH. Position 153 (Asp-153) interacts with Mn(2+). The 1-deoxy-D-xylulose 5-phosphate site is built by Ser-154, Glu-155, Ser-184, and His-207. Glu-155 is a binding site for Mn(2+). An NADPH-binding site is contributed by Gly-213. 1-deoxy-D-xylulose 5-phosphate contacts are provided by Ser-220, Asn-225, Lys-226, and Glu-229. Residue Glu-229 coordinates Mn(2+).

The protein belongs to the DXR family. It depends on Mg(2+) as a cofactor. Mn(2+) serves as cofactor.

It catalyses the reaction 2-C-methyl-D-erythritol 4-phosphate + NADP(+) = 1-deoxy-D-xylulose 5-phosphate + NADPH + H(+). Its pathway is isoprenoid biosynthesis; isopentenyl diphosphate biosynthesis via DXP pathway; isopentenyl diphosphate from 1-deoxy-D-xylulose 5-phosphate: step 1/6. Functionally, catalyzes the NADPH-dependent rearrangement and reduction of 1-deoxy-D-xylulose-5-phosphate (DXP) to 2-C-methyl-D-erythritol 4-phosphate (MEP). The protein is 1-deoxy-D-xylulose 5-phosphate reductoisomerase of Pseudomonas savastanoi pv. phaseolicola (strain 1448A / Race 6) (Pseudomonas syringae pv. phaseolicola (strain 1448A / Race 6)).